We begin with the raw amino-acid sequence, 116 residues long: Cuticle protein AM1274 (116 aa).

Position 1 is a pyrrolidone carboxylic acid (Gln-1). Positions 1–22 (QLANEPPIEIIRQESTDNGDGN) are disordered. The 66-residue stretch at 20–85 (DGNFNFLFET…PVSDFIPTPH (66 aa)) folds into the Chitin-binding type R&amp;R domain. An O-linked (HexNAc) threonine glycan is attached at Thr-83.

As to expression, arthrodial membrane.

The sequence is that of Cuticle protein AM1274 from Cancer pagurus (Rock crab).